A 427-amino-acid chain; its full sequence is Tol-Pal system protein TolB (427 aa).

Residues 1-23 (MKLLKRLVSVFAIVLAVGSNAFA) form the signal peptide.

Belongs to the TolB family. The Tol-Pal system is composed of five core proteins: the inner membrane proteins TolA, TolQ and TolR, the periplasmic protein TolB and the outer membrane protein Pal. They form a network linking the inner and outer membranes and the peptidoglycan layer.

The protein resides in the periplasm. Functionally, part of the Tol-Pal system, which plays a role in outer membrane invagination during cell division and is important for maintaining outer membrane integrity. The sequence is that of Tol-Pal system protein TolB from Haemophilus influenzae (strain 86-028NP).